We begin with the raw amino-acid sequence, 148 residues long: Deoxyuridine 5'-triphosphate nucleotidohydrolase (148 aa).

Substrate is bound by residues 67 to 69, asparagine 80, 84 to 86, and methionine 94; these read RSG and LID.

Belongs to the dUTPase family. Requires Mg(2+) as cofactor.

The catalysed reaction is dUTP + H2O = dUMP + diphosphate + H(+). It functions in the pathway pyrimidine metabolism; dUMP biosynthesis; dUMP from dCTP (dUTP route): step 2/2. Its function is as follows. This enzyme is involved in nucleotide metabolism: it produces dUMP, the immediate precursor of thymidine nucleotides and it decreases the intracellular concentration of dUTP so that uracil cannot be incorporated into DNA. The chain is Deoxyuridine 5'-triphosphate nucleotidohydrolase from Ralstonia pickettii (strain 12J).